Consider the following 20-residue polypeptide: Octopamine receptor (20 aa).

Belongs to the G-protein coupled receptor 1 family.

Its subcellular location is the cell membrane. Its function is as follows. Putative receptor for octopamine. Octopamine (OA) is a neurotransmitter, neurohormone, and neuromodulator in invertebrates. The activity of this receptor is mediated by G proteins which activate adenylyl cyclase. The polypeptide is Octopamine receptor (Photinus pyralis (Common eastern firefly)).